The chain runs to 307 residues: MAKKKIAISCGDIQGVGLELILKSHKEVSALCEPLYLVHSELLERANQLLDNAYETKTLNAIAIDAPLPLLNSSTIGKVSTQSGAYSFESFKKACELADSKEVDGICTLPINKLAWQQAQIPFVGHTDFLKQRYKDHQIIMMLGCSKLFVGLFSDHVPLSAVSQLIQVKALVKFLLAFQKSTQAKIVQVCGFNPHAGEEGLFGEEDEKILKAIQESNQTLGFECFLGPLPADSAFAPNKRKITPFYVSMSHDVGLAPLKALYFDESINVSLNAPILRASTDHGTAFDIAYQNKANHKSYLNAIKYLA.

Residues H126 and T127 each contribute to the substrate site. A divalent metal cation is bound by residues H156, H195, and H251. Substrate-binding residues include K259, N268, and R277.

Belongs to the PdxA family. In terms of assembly, homodimer. Zn(2+) serves as cofactor. Requires Mg(2+) as cofactor. Co(2+) is required as a cofactor.

The protein resides in the cytoplasm. It catalyses the reaction 4-(phosphooxy)-L-threonine + NAD(+) = 3-amino-2-oxopropyl phosphate + CO2 + NADH. The protein operates within cofactor biosynthesis; pyridoxine 5'-phosphate biosynthesis; pyridoxine 5'-phosphate from D-erythrose 4-phosphate: step 4/5. In terms of biological role, catalyzes the NAD(P)-dependent oxidation of 4-(phosphooxy)-L-threonine (HTP) into 2-amino-3-oxo-4-(phosphooxy)butyric acid which spontaneously decarboxylates to form 3-amino-2-oxopropyl phosphate (AHAP). The sequence is that of 4-hydroxythreonine-4-phosphate dehydrogenase from Helicobacter pylori (strain J99 / ATCC 700824) (Campylobacter pylori J99).